The chain runs to 34 residues: MSDIN-like toxin proprotein 12 (34 aa).

A propeptide spanning residues 1–10 (MSDINATRLP) is cleaved from the precursor. Positions 11-19 (HPFPLGLQP) form a cross-link, cyclopeptide (His-Pro). Residues 20–34 (CAGDVDNLTLTKGEG) constitute a propeptide that is removed on maturation.

The protein belongs to the MSDIN fungal toxin family. Processed by the macrocyclase-peptidase enzyme POPB to yield a toxic cyclic nonapeptide. POPB first removes 10 residues from the N-terminus. Conformational trapping of the remaining peptide forces the enzyme to release this intermediate rather than proceed to macrocyclization. The enzyme rebinds the remaining peptide in a different conformation and catalyzes macrocyclization of the N-terminal 9 residues.

Its function is as follows. Probable toxin that belongs to the MSDIN-like toxin family responsible for a large number of food poisoning cases and deaths. In Amanita bisporigera (Destroying angel), this protein is MSDIN-like toxin proprotein 12.